We begin with the raw amino-acid sequence, 293 residues long: Elongation factor Ts (293 aa).

The tract at residues 80-83 (TDFV) is involved in Mg(2+) ion dislocation from EF-Tu.

It belongs to the EF-Ts family.

It is found in the cytoplasm. Functionally, associates with the EF-Tu.GDP complex and induces the exchange of GDP to GTP. It remains bound to the aminoacyl-tRNA.EF-Tu.GTP complex up to the GTP hydrolysis stage on the ribosome. The chain is Elongation factor Ts from Paraburkholderia phymatum (strain DSM 17167 / CIP 108236 / LMG 21445 / STM815) (Burkholderia phymatum).